The following is a 213-amino-acid chain: ATP phosphoribosyltransferase (213 aa).

It belongs to the ATP phosphoribosyltransferase family. Short subfamily. Heteromultimer composed of HisG and HisZ subunits.

The protein localises to the cytoplasm. It catalyses the reaction 1-(5-phospho-beta-D-ribosyl)-ATP + diphosphate = 5-phospho-alpha-D-ribose 1-diphosphate + ATP. The protein operates within amino-acid biosynthesis; L-histidine biosynthesis; L-histidine from 5-phospho-alpha-D-ribose 1-diphosphate: step 1/9. Catalyzes the condensation of ATP and 5-phosphoribose 1-diphosphate to form N'-(5'-phosphoribosyl)-ATP (PR-ATP). Has a crucial role in the pathway because the rate of histidine biosynthesis seems to be controlled primarily by regulation of HisG enzymatic activity. The chain is ATP phosphoribosyltransferase from Methylococcus capsulatus (strain ATCC 33009 / NCIMB 11132 / Bath).